The chain runs to 207 residues: Ubiquitin-conjugating enzyme E2 E3 (207 aa).

Residues 1-10 (MSSDRQRSDD) are compositionally biased toward basic and acidic residues. Residues 1 to 63 (MSSDRQRSDD…KTTAKLSTSA (63 aa)) form a disordered region. The residue at position 2 (serine 2) is an N-acetylserine. Residue serine 8 is modified to Phosphoserine. Residues 50–63 (KLSSKTTAKLSTSA) show a composition bias toward low complexity. The UBC core domain maps to 61–207 (TSAKRIQKEL…ARQWTKRYAT (147 aa)). Cysteine 145 serves as the catalytic Glycyl thioester intermediate.

The protein belongs to the ubiquitin-conjugating enzyme family. As to quaternary structure, the ubiquitin-loaded form interacts specifically with importin-11 (IPO11), leading to its import into the nucleus. Interacts with NEDD4L.

It localises to the nucleus. The protein localises to the cytoplasm. The catalysed reaction is S-ubiquitinyl-[E1 ubiquitin-activating enzyme]-L-cysteine + [E2 ubiquitin-conjugating enzyme]-L-cysteine = [E1 ubiquitin-activating enzyme]-L-cysteine + S-ubiquitinyl-[E2 ubiquitin-conjugating enzyme]-L-cysteine.. The protein operates within protein modification; protein ubiquitination. Accepts ubiquitin from the E1 complex and catalyzes its covalent attachment to other proteins. In vitro catalyzes 'Lys-11'- and 'Lys-48'-, as well as 'Lys-63'-linked polyubiquitination. Participates in the regulation of transepithelial sodium transport in renal cells. This is Ubiquitin-conjugating enzyme E2 E3 (UBE2E3) from Bos taurus (Bovine).